The primary structure comprises 261 residues: Lipase LipV (261 aa).

The active-site Nucleophile is S87. Active-site charge relay system residues include D217 and H240.

It belongs to the AB hydrolase superfamily.

The catalysed reaction is a carboxylic ester + H2O = an alcohol + a carboxylate + H(+). It catalyses the reaction a tetradecanoate ester + H2O = an aliphatic alcohol + tetradecanoate + H(+). It carries out the reaction decanoate ester + H2O = decanoate + an aliphatic alcohol + H(+). The enzyme catalyses an octanoate ester + H2O = an aliphatic alcohol + octanoate + H(+). The catalysed reaction is a dodecanoate ester + H2O = an aliphatic alcohol + dodecanoate + H(+). It catalyses the reaction a butanoate ester + H2O = an aliphatic alcohol + butanoate + H(+). It carries out the reaction hexadecanoate ester + H2O = an aliphatic alcohol + hexadecanoate + H(+). The enzyme catalyses octadecanoate ester + H2O = an aliphatic alcohol + octadecanoate + H(+). With respect to regulation, is inhibited by tetrahydrolipstatin, a specific lipase inhibitor and RHC 80267, a diacylglycerol lipase inhibitor, but not by phenylglyoxal and iodoacetate. Functionally, lipase that displays broad substrate specificity and preferentially hydrolyzes p-nitrophenyl myristate in vitro. Also shows significant activity with pNP-butyrate (68%), pNP-octanoate (82%), pNP-decanoate (90%), and pNP-laurate (74%). Is probably involved in lipid catabolism. Is active at low pH, and might play some important role in mycobacterial biology in macrophages where the bacteria encounters acidic stress. This is Lipase LipV from Mycobacterium tuberculosis (strain ATCC 25618 / H37Rv).